A 159-amino-acid polypeptide reads, in one-letter code: MRFLVWVFFVGLVTFVSGTHAISKLANSNEPQSTQLTMKDIDTLTRLLFVEDGDAAKRFLRSNANQDLTTANDDSDVKEEERGLLPSKVTNLISKAKNGWAKWKANALEKAFQHMMKQGETPTSLAKRLEIGGAAELRYEKVYEKYTAWWINYHTVAGT.

The signal sequence occupies residues 1–18 (MRFLVWVFFVGLVTFVSG). The RxLR-dEER motif lies at 58 to 82 (RFLRSNANQDLTTANDDSDVKEEER). Positions 109–159 (EKAFQHMMKQGETPTSLAKRLEIGGAAELRYEKVYEKYTAWWINYHTVAGT) are RABA-binding domain.

It belongs to the RxLR effector family. In terms of assembly, interacts with potato RABA GTPases including RABA1a, RABA2a and RABA4a.

Its subcellular location is the secreted. It localises to the host cell membrane. It is found in the host endomembrane system. Its function is as follows. Effector protein that contributes to pathogen virulence. Targets members of the RABA GTPases subfamily to inhibit vesicular secretion, leading to an accumulation of secretory proteins in the endoplasmic reticulum. This Phytophthora infestans (strain T30-4) (Potato late blight agent) protein is RxLR effector protein 24.